The sequence spans 328 residues: MIFSILEHILTHISFSVVLIVMTIYFLTLLVNLDESIGFYDSSDKGIVITFFSITGFLFTRWIYSGHFPLSNLYESLIFLSWAFSIIHMVSYFNKKKKNNLNAITAPSAIFIQGFATSGLLNKMPQSAILVPALQSQWLMMHVSMMVLGYGALLCGSLLSIALLVITFRKVGPFFYKKNKKKTKLLTDFFSFGVLYYINERNSIFLRQNINLSFSRNYYRYQLIEQLDYWSYRIISLGFLFLTMGILSGAVWANETWGSYWNWDPKETWAFITWTIFAIYLHIKTKKNGRGINSAIVASIGFLVIWICYFGVNLLGIGLHSYGSFTSN.

Helical transmembrane passes span Ile13 to Leu33, Gly46 to Gly66, Leu73 to Phe93, Leu101 to Leu121, Met146 to Ile166, Ile234 to Asn254, Trp263 to Ile283, and Ala295 to Leu315.

This sequence belongs to the CcmF/CycK/Ccl1/NrfE/CcsA family. In terms of assembly, may interact with Ccs1.

The protein resides in the plastid. The protein localises to the chloroplast thylakoid membrane. Required during biogenesis of c-type cytochromes (cytochrome c6 and cytochrome f) at the step of heme attachment. This is Cytochrome c biogenesis protein CcsA from Aethionema cordifolium (Lebanon stonecress).